Here is a 211-residue protein sequence, read N- to C-terminus: MISYYFQGFALGAAMILPLGPQNAFVMNQGIRRQYHLMIALLCALSDLVLISAGIFGGSALLMQSPWLLALVTWGGVAFLLWYGFGALKTAMSSNLELASAEVMKRGRWKIIATMLAVTWLNPHVYLDTFVVLGSLGGQLAMEPKRWFALGTISASFLWFFGLALLAAWLAPRLRTAKAQRIINILVGVVMWLIAFQLAREGVAHMHALFN.

6 consecutive transmembrane segments (helical) span residues 1 to 21 (MISYYFQGFALGAAMILPLGP), 37 to 57 (LMIALLCALSDLVLISAGIFG), 68 to 88 (LLALVTWGGVAFLLWYGFGAL), 111 to 131 (IIATMLAVTWLNPHVYLDTFV), 147 to 167 (WFALGTISASFLWFFGLALLA), and 179 to 199 (AQRIINILVGVVMWLIAFQLA).

It belongs to the LysE/ArgO transporter (TC 2.A.75) family.

It localises to the cell inner membrane. The enzyme catalyses L-arginine(in) = L-arginine(out). In terms of biological role, involved in the export of arginine. Important to control the intracellular level of arginine and the correct balance between arginine and lysine. The polypeptide is Arginine exporter protein ArgO (Salmonella newport (strain SL254)).